Reading from the N-terminus, the 499-residue chain is tRNA (guanine(37)-N(1))-methyltransferase (499 aa).

Residues 1-44 (MKIALPVFQKFNRLISSCKMSGVFPYNPPVNRQMRELDRSFFIT) constitute a mitochondrion transit peptide. S-adenosyl-L-methionine contacts are provided by residues histidine 268, 307 to 308 (DL), 335 to 336 (DG), and asparagine 399.

Belongs to the class I-like SAM-binding methyltransferase superfamily. TRM5/TYW2 family. As to quaternary structure, monomer.

The protein localises to the mitochondrion matrix. It is found in the nucleus. The protein resides in the cytoplasm. It carries out the reaction guanosine(37) in tRNA + S-adenosyl-L-methionine = N(1)-methylguanosine(37) in tRNA + S-adenosyl-L-homocysteine + H(+). Functionally, specifically methylates the N1 position of guanosine-37 in various cytoplasmic and mitochondrial tRNAs. Methylation is not dependent on the nature of the nucleoside 5' of the target nucleoside. This is the first step in the biosynthesis of wybutosine (yW), a modified base adjacent to the anticodon of tRNAs and required for accurate decoding. Postspliced cytoplasmic tRNAs are imported into the nucleus, where this first step seems to take place, after which they are reexported to the cytoplasm, where the yW sythesis is completed by cytoplasmic enzymes. The polypeptide is tRNA (guanine(37)-N(1))-methyltransferase (Saccharomyces cerevisiae (strain ATCC 204508 / S288c) (Baker's yeast)).